The chain runs to 1194 residues: Metabotropic glutamate receptor 1 (1194 aa).

Positions 1 to 18 are cleaved as a signal peptide; the sequence is MVGLLLFFFPAIFLEVSL. The Extracellular segment spans residues 19–592; that stretch reads LPRSPGRKVL…VRYLEWSNIE (574 aa). An intrachain disulfide couples Cys67 to Cys109. Tyr74 contributes to the L-glutamate binding site. Residue Asn98 is glycosylated (N-linked (GlcNAc...) asparagine). Residues Ser165 and 186–188 each bind L-glutamate; that span reads SAT. Residue Asn223 is glycosylated (N-linked (GlcNAc...) asparagine). L-glutamate is bound at residue Tyr236. Cys289 and Cys291 are joined by a disulfide. An L-glutamate-binding site is contributed by Asp318. Cysteines 378 and 394 form a disulfide. An N-linked (GlcNAc...) asparagine glycan is attached at Asn397. Lys409 provides a ligand contact to L-glutamate. Cys432 and Cys439 are joined by a disulfide. The N-linked (GlcNAc...) asparagine glycan is linked to Asn515. A helical membrane pass occupies residues 593–615; the sequence is SIIAIAFSCLGILVTLFVTLIFV. Residues 616 to 629 lie on the Cytoplasmic side of the membrane; the sequence is LYRDTPVVKSSSRE. The chain crosses the membrane as a helical span at residues 630–650; that stretch reads LCYIILAGIFLGYVCPFTLIA. The Extracellular portion of the chain corresponds to 651–658; the sequence is KPTTTSCY. A disulfide bridge links Cys657 with Cys746. Residues 659–680 traverse the membrane as a helical segment; it reads LQRLLVGLSSAMCYSALVTKTN. The Cytoplasmic segment spans residues 681–703; it reads RIARILAGSKKKICTRKPRFMSA. Residues 704–727 form a helical membrane-spanning segment; the sequence is WAQVIIASILISVQLTLVVTLIIM. Over 728–750 the chain is Extracellular; the sequence is EPPMPILSYPSIKEVYLICNTSN. The chain crosses the membrane as a helical span at residues 751–772; that stretch reads LGVVAPLGYNGLLIMSCTYYAF. Residues 773-785 lie on the Cytoplasmic side of the membrane; it reads KTRNVPANFNEAK. Residues 786–807 form a helical membrane-spanning segment; it reads YIAFTMYTTCIIWLAFVPIYFG. The Extracellular segment spans residues 808–815; that stretch reads SNYKIITT. A helical membrane pass occupies residues 816 to 840; it reads CFAVSLSVTVALGCMFTPKMYIIIA. The Cytoplasmic segment spans residues 841–1194; that stretch reads KPERNVRSAF…RDYKQSSSTL (354 aa). The residue at position 853 (Ser853) is a Phosphoserine. Thr871 carries the post-translational modification Phosphothreonine. A disordered region spans residues 883 to 905; it reads AGNANSNGKSVSWSEPGGGQVPK. A compositionally biased stretch (polar residues) spans 885 to 895; the sequence is NANSNGKSVSW. Phosphoserine occurs at positions 894 and 969. The disordered stretch occupies residues 1007 to 1030; it reads PALPKGLPPPLQQQQQPPPQQKSL. Pro residues predominate over residues 1012–1026; sequence GLPPPLQQQQQPPPQ. A Phosphoserine modification is found at Ser1091. Residues 1113-1173 form a disordered region; it reads HEREGNTEED…SPVSESVLCT (61 aa). Positions 1119 to 1131 are enriched in acidic residues; it reads TEEDELEEEEEDL. A Phosphoserine modification is found at Ser1142. Residue Thr1146 is modified to Phosphothreonine. Ser1149 carries the post-translational modification Phosphoserine. The segment covering 1154-1170 has biased composition (low complexity); the sequence is SVASGSSVPSSPVSESV.

This sequence belongs to the G-protein coupled receptor 3 family. As to quaternary structure, homodimer; disulfide-linked. The PPXXF motif binds HOMER1, HOMER2 and HOMER3. Interacts with TAMALIN. Interacts with RYR1, RYR2, ITPR1, SHANK1 and SHANK3. Interacts with SIAH1. As to expression, detected in brain.

It is found in the cell membrane. The protein localises to the postsynaptic cell membrane. The protein resides in the cell projection. Its subcellular location is the dendrite. Its activity is regulated as follows. Signaling is inhibited by the antagonist LY341495. The LY341495 binding site partially overlaps with the glutamate binding site. Signaling is also inhibited by synthetic allosteric regulators, such as FITM (4-fluoro-N-(4-(6-(isopropylamino)pyrimidin-4-yl)thiazol-2-yl)-N-methylbenzamide) that bind in a pocket between the transmembrane helices. Its function is as follows. G-protein coupled receptor for glutamate. Ligand binding causes a conformation change that triggers signaling via guanine nucleotide-binding proteins (G proteins) and modulates the activity of down-stream effectors. Signaling activates a phosphatidylinositol-calcium second messenger system. May participate in the central action of glutamate in the CNS, such as long-term potentiation in the hippocampus and long-term depression in the cerebellum. May function in the light response in the retina. Induces GRID1 and GRID2 cation-channel activation via GNAQ-PLC-PKC pathway in dopaminergic neurons and cerebellar Purkinje cell, respectively. This chain is Metabotropic glutamate receptor 1 (GRM1), found in Homo sapiens (Human).